The primary structure comprises 71 residues: Small ribosomal subunit protein bS21 (71 aa).

Positions 48–59 (KAAAAVKRHAKK) are enriched in basic residues. The disordered stretch occupies residues 48 to 71 (KAAAAVKRHAKKVQRENRKFQRLY). The span at 60–71 (VQRENRKFQRLY) shows a compositional bias: basic and acidic residues.

It belongs to the bacterial ribosomal protein bS21 family.

The protein is Small ribosomal subunit protein bS21 of Saccharophagus degradans (strain 2-40 / ATCC 43961 / DSM 17024).